A 619-amino-acid chain; its full sequence is MPWQAFRRFGQKLVRRRTLESGMAETRLARCLSTLDLVALGVGSTLGAGVYVLAGEVAKDKAGPSIVICFLVAALSSVLAGLCYAEFGARVPRSGSAYLYSYVTVGELWAFTTGWNLILSYVIGTASVARAWSSAFDNLIGNHISKTLQGSIALHVPHVLAEYPDFFALGLVLLLTGLLALGASESALVTKVFTGVNLLVLGFVMISGFVKGDVHNWKLTEEDYELAMAELNDTYSLGPLGSGGFVPFGFEGILRGAATCFYAFVGFDCIATTGEEAQNPQRSIPMGIVISLSVCFLAYFAVSSALTLMMPYYQLQPESPLPEAFLYIGWAPARYVVAVGSLCALSTSLLGSMFPMPRVIYAMAEDGLLFRVLARIHTGTRTPIIATVVSGIIAAFMAFLFKLTDLVDLMSIGTLLAYSLVSICVLILRYQPDQETKTGEEVELQEEAITTESEKLTLWGLFFPLNSIPTPLSGQIVYVCSSLLAVLLTALCLVLAQWSVPLLSGDLLWTAVVVLLLLLIIGIIVVIWRQPQSSTPLHFKVPALPLLPLMSIFVNIYLMMQMTAGTWARFGVWMLIGFAIYFGYGIQHSLEEIKSNQPSRKSRAKTVDLDPGTLYVHSV.

The Cytoplasmic portion of the chain corresponds to 1–36 (MPWQAFRRFGQKLVRRRTLESGMAETRLARCLSTLD). Residues 37–57 (LVALGVGSTLGAGVYVLAGEV) form a helical membrane-spanning segment. Residues 58–61 (AKDK) lie on the Extracellular side of the membrane. Residues 62 to 82 (AGPSIVICFLVAALSSVLAGL) form a helical membrane-spanning segment. At 83–107 (CYAEFGARVPRSGSAYLYSYVTVGE) the chain is on the cytoplasmic side. The helical transmembrane segment at 108–128 (LWAFTTGWNLILSYVIGTASV) threads the bilayer. Residues 129-162 (ARAWSSAFDNLIGNHISKTLQGSIALHVPHVLAE) are Extracellular-facing. Residues 163 to 183 (YPDFFALGLVLLLTGLLALGA) form a helical membrane-spanning segment. The Cytoplasmic portion of the chain corresponds to 184–191 (SESALVTK). Residues 192–212 (VFTGVNLLVLGFVMISGFVKG) traverse the membrane as a helical segment. Residues 213-233 (DVHNWKLTEEDYELAMAELND) are Extracellular-facing. Asparagine 232 is a glycosylation site (N-linked (GlcNAc...) asparagine). A helical transmembrane segment spans residues 234 to 254 (TYSLGPLGSGGFVPFGFEGIL). At 255-285 (RGAATCFYAFVGFDCIATTGEEAQNPQRSIP) the chain is on the cytoplasmic side. Residues 286 to 306 (MGIVISLSVCFLAYFAVSSAL) traverse the membrane as a helical segment. The Extracellular portion of the chain corresponds to 307 to 335 (TLMMPYYQLQPESPLPEAFLYIGWAPARY). The chain crosses the membrane as a helical span at residues 336–356 (VVAVGSLCALSTSLLGSMFPM). At 357–382 (PRVIYAMAEDGLLFRVLARIHTGTRT) the chain is on the cytoplasmic side. The chain crosses the membrane as a helical span at residues 383–403 (PIIATVVSGIIAAFMAFLFKL). The Extracellular segment spans residues 404–406 (TDL). The chain crosses the membrane as a helical span at residues 407–427 (VDLMSIGTLLAYSLVSICVLI). Topologically, residues 428–475 (LRYQPDQETKTGEEVELQEEAITTESEKLTLWGLFFPLNSIPTPLSGQ) are cytoplasmic. The helical transmembrane segment at 476 to 496 (IVYVCSSLLAVLLTALCLVLA) threads the bilayer. The Extracellular segment spans residues 497 to 506 (QWSVPLLSGD). A helical transmembrane segment spans residues 507-527 (LLWTAVVVLLLLLIIGIIVVI). Topologically, residues 528–540 (WRQPQSSTPLHFK) are cytoplasmic. The helical transmembrane segment at 541–561 (VPALPLLPLMSIFVNIYLMMQ) threads the bilayer. The Extracellular portion of the chain corresponds to 562–569 (MTAGTWAR). A helical transmembrane segment spans residues 570–590 (FGVWMLIGFAIYFGYGIQHSL). Residues 591–619 (EEIKSNQPSRKSRAKTVDLDPGTLYVHSV) are Cytoplasmic-facing. Residue threonine 606 is modified to Phosphothreonine. The residue at position 618 (serine 618) is a Phosphoserine.

This sequence belongs to the amino acid-polyamine-organocation (APC) superfamily. Cationic amino acid transporter (CAT) (TC 2.A.3.3) family. N-glycosylated. Highly expressed in thymus, uterus and testis. Detected at lower levels in brain, mammary gland, prostate, salivary gland and fetal spleen. In brain, highest expression in thalamus, hippocampus and amygdala.

The protein localises to the cell membrane. The enzyme catalyses L-arginine(in) = L-arginine(out). It carries out the reaction L-lysine(in) = L-lysine(out). It catalyses the reaction L-ornithine(in) = L-ornithine(out). Functionally, uniporter that mediates the uptake of cationic L-amino acids such as L-arginine, L-lysine and L-ornithine. The transport is sodium ions- and pH-independent, moderately trans-stimulated and is mediated by passive diffusion. The protein is Cationic amino acid transporter 3 of Homo sapiens (Human).